We begin with the raw amino-acid sequence, 304 residues long: Dipeptide transport system permease protein DppC (304 aa).

Residues 1 to 24 (MKTEHAKPLMTPEPNSPPPEDQYT) are disordered. The next 6 membrane-spanning stretches (helical) occupy residues 41–61 (LAIV…FAPL), 108–128 (VGFF…LIAG), 141–161 (IFDI…VAIL), 164–184 (SLQN…GRLV), 227–247 (ATLG…LGLG), and 271–291 (WTVL…NMIG). In terms of domain architecture, ABC transmembrane type-1 spans 102–291 (ARLSLQVGFF…LVVLGFNMIG (190 aa)).

This sequence belongs to the binding-protein-dependent transport system permease family. OppBC subfamily.

It is found in the cell membrane. In terms of biological role, probably part of the ABC transporter Dpp involved in dipeptide transport. Responsible for the translocation of the substrate across the membrane. This Alkalihalophilus pseudofirmus (strain ATCC BAA-2126 / JCM 17055 / OF4) (Bacillus pseudofirmus) protein is Dipeptide transport system permease protein DppC (dppC).